We begin with the raw amino-acid sequence, 322 residues long: Phosphate acetyltransferase (322 aa).

It belongs to the phosphate acetyltransferase and butyryltransferase family.

It is found in the cytoplasm. The enzyme catalyses acetyl-CoA + phosphate = acetyl phosphate + CoA. It participates in metabolic intermediate biosynthesis; acetyl-CoA biosynthesis; acetyl-CoA from acetate: step 2/2. The protein is Phosphate acetyltransferase (pta) of Mycoplasma capricolum subsp. capricolum (strain California kid / ATCC 27343 / NCTC 10154).